The primary structure comprises 452 residues: Tubulin gamma chain (452 aa).

Residue 142 to 148 (AGGTGSG) participates in GTP binding.

Belongs to the tubulin family.

Its subcellular location is the cytoplasm. It localises to the cytoskeleton. It is found in the microtubule organizing center. The protein resides in the centrosome. Its function is as follows. Tubulin is the major constituent of microtubules. The gamma chain is found at microtubule organizing centers (MTOC) such as the spindle poles or the centrosome, suggesting that it is involved in the minus-end nucleation of microtubule assembly. This is Tubulin gamma chain (G-TUB) from Plasmodium falciparum (isolate NF54).